The following is a 257-amino-acid chain: Zinc transporter ZupT (257 aa).

3 helical membrane-spanning segments follow: residues 5–25 (LILTILAGAATFIGAFLGVLG), 32–52 (LLAFSLGFAAGIMLLISLMEM), and 61–81 (GMSPVLGYGMFIFGLLGYFGL). Residues Asn120 and Glu123 each coordinate Fe(2+). Zn(2+)-binding residues include Glu123 and His148. A run of 4 helical transmembrane segments spans residues 137 to 157 (LGFGIALAVALHNIPEGLAVA), 171 to 191 (ILWAGISGLAEILGGVLAWLI), 195 to 215 (MISPVVMAAIMAAVAGIMVAL), and 236 to 256 (GVLCGMSVMGFSLVLLQTAGI). Positions 149, 152, and 181 each coordinate Fe(2+). Glu152 provides a ligand contact to Zn(2+).

This sequence belongs to the ZIP transporter (TC 2.A.5) family. ZupT subfamily.

It localises to the cell inner membrane. It carries out the reaction Zn(2+)(in) = Zn(2+)(out). Functionally, mediates zinc uptake. May also transport other divalent cations. This is Zinc transporter ZupT from Escherichia coli O45:K1 (strain S88 / ExPEC).